We begin with the raw amino-acid sequence, 358 residues long: 3-dehydroquinate synthase (358 aa).

Residues glycine 105 to aspartate 109, threonine 129 to threonine 130, lysine 142, lysine 151, and threonine 169 to threonine 172 contribute to the NAD(+) site. Zn(2+)-binding residues include glutamate 184, histidine 245, and histidine 262.

This sequence belongs to the sugar phosphate cyclases superfamily. Dehydroquinate synthase family. The cofactor is NAD(+). Requires Co(2+) as cofactor. Zn(2+) is required as a cofactor.

Its subcellular location is the cytoplasm. The enzyme catalyses 7-phospho-2-dehydro-3-deoxy-D-arabino-heptonate = 3-dehydroquinate + phosphate. It functions in the pathway metabolic intermediate biosynthesis; chorismate biosynthesis; chorismate from D-erythrose 4-phosphate and phosphoenolpyruvate: step 2/7. In terms of biological role, catalyzes the conversion of 3-deoxy-D-arabino-heptulosonate 7-phosphate (DAHP) to dehydroquinate (DHQ). In Enterococcus faecalis (strain ATCC 700802 / V583), this protein is 3-dehydroquinate synthase.